The following is a 311-amino-acid chain: Elongation factor Ts (311 aa).

The involved in Mg(2+) ion dislocation from EF-Tu stretch occupies residues 81-84 (TDFV).

Belongs to the EF-Ts family.

It localises to the cytoplasm. Associates with the EF-Tu.GDP complex and induces the exchange of GDP to GTP. It remains bound to the aminoacyl-tRNA.EF-Tu.GTP complex up to the GTP hydrolysis stage on the ribosome. The sequence is that of Elongation factor Ts from Trichlorobacter lovleyi (strain ATCC BAA-1151 / DSM 17278 / SZ) (Geobacter lovleyi).